The primary structure comprises 359 residues: ATP-dependent (S)-NAD(P)H-hydrate dehydratase (359 aa).

In terms of domain architecture, YjeF C-terminal spans 61–350 (LLEEARKVVP…SEINSVFVNN (290 aa)). (6S)-NADPHX is bound by residues glycine 161 and 214 to 220 (NVVEFQR). ATP is bound by residues 256–260 (KGEVD) and 275–284 (GSPRRCGGQG). Residue aspartate 285 coordinates (6S)-NADPHX.

The protein belongs to the NnrD/CARKD family. Mg(2+) serves as cofactor.

The enzyme catalyses (6S)-NADHX + ATP = ADP + phosphate + NADH + H(+). It catalyses the reaction (6S)-NADPHX + ATP = ADP + phosphate + NADPH + H(+). Functionally, catalyzes the dehydration of the S-form of NAD(P)HX at the expense of ATP, which is converted to ADP. Together with NAD(P)HX epimerase, which catalyzes the epimerization of the S- and R-forms, the enzyme allows the repair of both epimers of NAD(P)HX, a damaged form of NAD(P)H that is a result of enzymatic or heat-dependent hydration. The protein is ATP-dependent (S)-NAD(P)H-hydrate dehydratase of Ciona intestinalis (Transparent sea squirt).